A 1049-amino-acid chain; its full sequence is MFEDEPHAEGAAAVAAAREALQALCQELNLDEGSAAEALDDFTAIRGNYSLEGEVIHWLACSLYVACRKSIIPTVGKGVMEGNCVSLTRILRSAKLSLIQFFSKMKKWMDMSNLPQEFRERIERLERNFEVSTVIFKKFEPIFLDIFQNPYEELPKLPRSRKQRRIPCSVKDLFNFCWTLFVYTKGNFRMIGDDLVNSYHLLLCCLDLIFANAIMCPNRRDLLNPSFKGLPSDFHAVNFKAAEEPPCIIAVLCDLHDGLLVEAKGIKEHYFKPYISKLFDKKILKGECLLDLSSFTDNSKAVNKEYEEYVLTVGDFDERIFLGADAEEEIGTPRKFAADTQFGKLTSQASVDCNLQQHFEKKRSFAPSTPLTGRRYLQEKEAVTTPVASATQSVSRLQSIVAGLKSAPSEQLLTIFESCMRNPMGNIVKIVKGIGETFCQHYTQSTDKQPGSHIDFAVNRLKLAEILYYKILETIMVQETRRLHGMDMSVLLEQDIFHRSLLACCLEIVLFAYSSPRTFPWIIDVLGLQPFYFYKVIEVVIRSEEGLSRDMVKHLNSIEEQILESLAWTNNSALWEALRASANKVPSCEEVIFPNNFEIGNGGSVQGHLPMMPMSPIIHPRVKEVRTDSGSLRKDMQPLSPISVHERYSSPAAGSAKRRLFGDDPPKETLMEKIMAEGTQLKIAPSSVTAESLSISPGQALLTMATTTVTGTTGRKVTVPLHGIANDAGEITLVPISMNTTQDSTAESLVSLTAQSLIGASPKQTHLTKTQDAPLTGISKPKRTGSLALFYRKVYHLASVRLRDLCLKLDVSNELRRKIWTCFEFTLVHCPDLMKDRHLDQLLLCAFYIMAKVTKEERTFQEIMKSYRNQPQANSHVYRSVLLKSIPGEVVAYNGDYEMTDGDIEDATKTPNCSSEPVKEERGDLIKFYNAIYVGRVKSFALKYDLSNQDHIMDAPPLSPFPHIKQQPGSPRRISQQHSIYVSPHKNASGLTPRSALLYKFNGSPSKKAKKRVIAISGDAESPAKRLCQENDDVLLKRLQDVVSERANH.

Phosphothreonine occurs at positions 332, 369, and 385. Positions 385 to 584 (TPVASATQSV…WEALRASANK (200 aa)) are domain A. A pocket; binds T and E1A region spans residues 385 to 944 (TPVASATQSV…GRVKSFALKY (560 aa)). The spacer stretch occupies residues 585 to 779 (VPSCEEVIFP…TQDAPLTGIS (195 aa)). Residues Ser-640, Ser-650, Ser-748, and Ser-761 each carry the phosphoserine modification. The interval 780–944 (KPKRTGSLAL…GRVKSFALKY (165 aa)) is domain B. Phosphoserine is present on residues Ser-959, Ser-970, and Ser-983. Thr-992 carries the post-translational modification Phosphothreonine. 2 positions are modified to phosphoserine: Ser-1004 and Ser-1022.

It belongs to the retinoblastoma protein (RB) family. As to quaternary structure, component of the DREAM complex (also named LINC complex) at least composed of E2F4, E2F5, LIN9, LIN37, LIN52, LIN54, MYBL1, MYBL2, RBL1, RBL2, RBBP4, TFDP1 and TFDP2. The complex exists in quiescent cells where it represses cell cycle-dependent genes. It dissociates in S phase when LIN9, LIN37, LIN52 and LIN54 form a subcomplex that binds to MYBL2. Interacts with AATF. Interacts with KDM5A. Interacts with KMT5B and KMT5C. Interacts with USP4. Interacts with RBBP9. Post-translationally, cell-cycle arrest properties are inactivated by phosphorylation on Thr-332, Ser-640, Ser-959 and Ser-970 by CDK4.

It localises to the nucleus. Key regulator of entry into cell division. Directly involved in heterochromatin formation by maintaining overall chromatin structure and, in particular, that of constitutive heterochromatin by stabilizing histone methylation. Recruits and targets histone methyltransferases KMT5B and KMT5C, leading to epigenetic transcriptional repression. Controls histone H4 'Lys-20' trimethylation. Probably acts as a transcription repressor by recruiting chromatin-modifying enzymes to promoters. Potent inhibitor of E2F-mediated trans-activation. May act as a tumor suppressor. This chain is Retinoblastoma-like protein 1, found in Rattus norvegicus (Rat).